The following is a 301-amino-acid chain: Glycine--tRNA ligase alpha subunit (301 aa).

This sequence belongs to the class-II aminoacyl-tRNA synthetase family. In terms of assembly, tetramer of two alpha and two beta subunits.

It is found in the cytoplasm. It catalyses the reaction tRNA(Gly) + glycine + ATP = glycyl-tRNA(Gly) + AMP + diphosphate. This chain is Glycine--tRNA ligase alpha subunit, found in Shewanella amazonensis (strain ATCC BAA-1098 / SB2B).